A 241-amino-acid chain; its full sequence is Uracil-DNA glycosylase (241 aa).

The active-site Proton acceptor is aspartate 68.

Belongs to the uracil-DNA glycosylase (UDG) superfamily. UNG family.

It is found in the cytoplasm. The catalysed reaction is Hydrolyzes single-stranded DNA or mismatched double-stranded DNA and polynucleotides, releasing free uracil.. Its function is as follows. Excises uracil residues from the DNA which can arise as a result of misincorporation of dUMP residues by DNA polymerase or due to deamination of cytosine. This is Uracil-DNA glycosylase from Rhizobium meliloti (strain 1021) (Ensifer meliloti).